Reading from the N-terminus, the 427-residue chain is Trigger factor (427 aa).

Residues 163-248 (GDTVILDFEG…LHEIKTKEVP (86 aa)) form the PPIase FKBP-type domain.

Belongs to the FKBP-type PPIase family. Tig subfamily.

The protein localises to the cytoplasm. The catalysed reaction is [protein]-peptidylproline (omega=180) = [protein]-peptidylproline (omega=0). Its function is as follows. Involved in protein export. Acts as a chaperone by maintaining the newly synthesized protein in an open conformation. Functions as a peptidyl-prolyl cis-trans isomerase. The protein is Trigger factor of Listeria welshimeri serovar 6b (strain ATCC 35897 / DSM 20650 / CCUG 15529 / CIP 8149 / NCTC 11857 / SLCC 5334 / V8).